A 320-amino-acid polypeptide reads, in one-letter code: MQYAKISGTGSYLPANRVSNDDLAQKVDTSDEWITARTGIKFRHIAAENEKTSDLAAEAARRALDAAGLDSGEIDLIIVATATPDMQFPSTATIVQQKLGITNGCPAFDVQAVCAGFMYALTTANAYIKSGMAKNALVIGAETFSRIVDWNDRTTCVLFGDGAGAVVLSAADKPGIIHSKLKADGNYLKLLNVPGQIACGKVSGSPYISMDGPGVFKFAVKMLSKIADDVIEEAGYTAAQIDWIVPHQANRRIIESTAKHLGLSMDKVVLTVQDHGNTSAASIPLALDTGIRSGQIKRGQNLLLEGIGGGFAWGAVLLQY.

Active-site residues include C114 and H247. The interval 248–252 is ACP-binding; sequence QANRR. N277 is an active-site residue.

Belongs to the thiolase-like superfamily. FabH family. In terms of assembly, homodimer.

Its subcellular location is the cytoplasm. The enzyme catalyses malonyl-[ACP] + acetyl-CoA + H(+) = 3-oxobutanoyl-[ACP] + CO2 + CoA. The protein operates within lipid metabolism; fatty acid biosynthesis. Functionally, catalyzes the condensation reaction of fatty acid synthesis by the addition to an acyl acceptor of two carbons from malonyl-ACP. Catalyzes the first condensation reaction which initiates fatty acid synthesis and may therefore play a role in governing the total rate of fatty acid production. Possesses both acetoacetyl-ACP synthase and acetyl transacylase activities. Its substrate specificity determines the biosynthesis of branched-chain and/or straight-chain of fatty acids. This Neisseria meningitidis serogroup C (strain 053442) protein is Beta-ketoacyl-[acyl-carrier-protein] synthase III.